Reading from the N-terminus, the 214-residue chain is Protein GrpE (214 aa).

Polar residues predominate over residues 1-13 (MKHTSEPTSQPDT). The tract at residues 1-61 (MKHTSEPTSQ…AAVAEATIEP (61 aa)) is disordered. Over residues 14–57 (QAAESAQSSAAAAGQAASAYSSQAQRASADAQAIAGDEAAVAEA) the composition is skewed to low complexity.

The protein belongs to the GrpE family. Homodimer.

The protein resides in the cytoplasm. Its function is as follows. Participates actively in the response to hyperosmotic and heat shock by preventing the aggregation of stress-denatured proteins, in association with DnaK and GrpE. It is the nucleotide exchange factor for DnaK and may function as a thermosensor. Unfolded proteins bind initially to DnaJ; upon interaction with the DnaJ-bound protein, DnaK hydrolyzes its bound ATP, resulting in the formation of a stable complex. GrpE releases ADP from DnaK; ATP binding to DnaK triggers the release of the substrate protein, thus completing the reaction cycle. Several rounds of ATP-dependent interactions between DnaJ, DnaK and GrpE are required for fully efficient folding. The polypeptide is Protein GrpE (Ralstonia nicotianae (strain ATCC BAA-1114 / GMI1000) (Ralstonia solanacearum)).